The following is a 203-amino-acid chain: NAD(P)H dehydrogenase (quinone) (203 aa).

A Flavodoxin-like domain is found at 3 to 194; it reads VLIVYYSLYG…DAARFQGRHI (192 aa). Residues 9–14 and 82–84 each bind FMN; these read SLYGHV and TRF. Tyrosine 11 contributes to the NAD(+) binding site. Tryptophan 102 contributes to the substrate binding site. Residues 117–123 and histidine 138 each bind FMN; that span reads STATQHG.

The protein belongs to the WrbA family. It depends on FMN as a cofactor.

The enzyme catalyses a quinone + NADH + H(+) = a quinol + NAD(+). The catalysed reaction is a quinone + NADPH + H(+) = a quinol + NADP(+). This Solidesulfovibrio magneticus (strain ATCC 700980 / DSM 13731 / RS-1) (Desulfovibrio magneticus) protein is NAD(P)H dehydrogenase (quinone).